The sequence spans 860 residues: Leucine-rich repeat and death domain-containing protein 1 (860 aa).

The tract at residues M1–L103 is disordered. Residues K50 to G72 are compositionally biased toward polar residues. Over residues T90 to L103 the composition is skewed to low complexity. 26 LRR repeats span residues L139 to I163, K164 to D186, L187 to L210, H211 to L233, N235 to L256, G257 to L279, T281 to L302, P303 to L325, K326 to L348, K350 to F371, R372 to C394, M396 to L417, N419 to L440, N441 to C463, K465 to L486, D487 to K510, L512 to L532, I533 to M555, S557 to L578, E579 to L601, G603 to L624, L627 to M650, T651 to L673, N675 to L696, N697 to I719, and S721 to G742. A Death domain is found at E764–N852. One copy of the LRR 27 repeat lies at R856 to F860.

This is Leucine-rich repeat and death domain-containing protein 1 (LRRD1) from Homo sapiens (Human).